The chain runs to 290 residues: 2-dehydro-3-deoxy-phosphogluconate/2-dehydro-3-deoxy-6-phosphogalactonate aldolase (290 aa).

Substrate is bound by residues 42–43 (TT), 129–131 (YNY), and 155–157 (KDT). Lysine 155 serves as the catalytic Schiff-base intermediate with substrate.

This sequence belongs to the DapA family. KDPG aldolase subfamily. In terms of assembly, homotetramer; dimer of dimers.

The enzyme catalyses 2-dehydro-3-deoxy-6-phospho-D-gluconate = D-glyceraldehyde 3-phosphate + pyruvate. It catalyses the reaction 2-dehydro-3-deoxy-6-phospho-D-galactonate = D-glyceraldehyde 3-phosphate + pyruvate. Its pathway is carbohydrate acid metabolism; 2-dehydro-3-deoxy-D-gluconate degradation; D-glyceraldehyde 3-phosphate and pyruvate from 2-dehydro-3-deoxy-D-gluconate: step 2/2. Its function is as follows. Involved in the degradation of glucose and galactose via the Entner-Doudoroff pathway. Catalyzes the reversible cleavage of 2-keto-3-deoxy-6-phosphogluconate (KDPG) and 2-keto-3-deoxygluconate (KDG) forming pyruvate and glyceraldehyde 3-phosphate or glyceraldehyde, respectively. It is also able to catalyze the reversible cleavage of 2-keto-3-deoxy-6-phosphogalactonate (KDPGal) and 2-keto-3-deoxygalactonate (KDGal). The protein is 2-dehydro-3-deoxy-phosphogluconate/2-dehydro-3-deoxy-6-phosphogalactonate aldolase (kdgA) of Sulfurisphaera tokodaii (strain DSM 16993 / JCM 10545 / NBRC 100140 / 7) (Sulfolobus tokodaii).